The primary structure comprises 277 residues: Phosphate import ATP-binding protein PstB (277 aa).

The ABC transporter domain maps to 31–272; that stretch reads IEVPGLSLFY…PAKKQTEDYI (242 aa). 63-70 serves as a coordination point for ATP; it reads GPSGCGKS.

It belongs to the ABC transporter superfamily. Phosphate importer (TC 3.A.1.7) family. In terms of assembly, the complex is composed of two ATP-binding proteins (PstB), two transmembrane proteins (PstC and PstA) and a solute-binding protein (PstS).

Its subcellular location is the cell inner membrane. The catalysed reaction is phosphate(out) + ATP + H2O = ADP + 2 phosphate(in) + H(+). Part of the ABC transporter complex PstSACB involved in phosphate import. Responsible for energy coupling to the transport system. This chain is Phosphate import ATP-binding protein PstB, found in Pseudomonas putida (Arthrobacter siderocapsulatus).